The following is a 177-amino-acid chain: Cytidylate kinase (177 aa).

8 to 16 contacts ATP; the sequence is GPPGGGKTT.

It belongs to the cytidylate kinase family. Type 2 subfamily.

It localises to the cytoplasm. The catalysed reaction is CMP + ATP = CDP + ADP. It carries out the reaction dCMP + ATP = dCDP + ADP. This chain is Cytidylate kinase, found in Staphylothermus marinus (strain ATCC 43588 / DSM 3639 / JCM 9404 / F1).